Consider the following 344-residue polypeptide: MIELQGLSQRFPGGSGEVHALRDVSLSIGAGEVFGIIGRSGAGKSTLVRAINLLNRPTSGRVIVGGQDLTALDNGALRLARRDIGMIFQHFNLLSSRTVFDNVALPLELAGKTKSEIEATVLPLLDLVGLSVLKDRYPSQISGGQKQRVGIARALASKPKVLLSDEATSALDPETTRSILDLLKQINRELGLTIVMITHQMEVIKQVCDRVAVLEAGRVVEEGRVIDVFLRPQHEVTRAMIGDVIAQELPESVLKRVESRLGNGRDHVYRLAFTGEGVDQPVLAQAIRRYGLDFNILHGHIDEIQGQAFGSLAIMATGELADVKAAMEYLQQQGVVVEEIEHVV.

Positions 2–241 (IELQGLSQRF…PQHEVTRAMI (240 aa)) constitute an ABC transporter domain. 38–45 (GRSGAGKS) provides a ligand contact to ATP.

It belongs to the ABC transporter superfamily. Methionine importer (TC 3.A.1.24) family. The complex is composed of two ATP-binding proteins (MetN), two transmembrane proteins (MetI) and a solute-binding protein (MetQ).

Its subcellular location is the cell inner membrane. It carries out the reaction L-methionine(out) + ATP + H2O = L-methionine(in) + ADP + phosphate + H(+). The enzyme catalyses D-methionine(out) + ATP + H2O = D-methionine(in) + ADP + phosphate + H(+). In terms of biological role, part of the ABC transporter complex MetNIQ involved in methionine import. Responsible for energy coupling to the transport system. The sequence is that of Methionine import ATP-binding protein MetN from Cupriavidus pinatubonensis (strain JMP 134 / LMG 1197) (Cupriavidus necator (strain JMP 134)).